Reading from the N-terminus, the 869-residue chain is Speckle targeted PIP5K1A-regulated poly(A) polymerase (869 aa).

Residues 16-46 (FRCCLCHVTTANRPSLDAHLGGRKHRHLVEL) form a Matrin-type zinc finger. The 73-residue stretch at 56–128 (RSVFVSGFPR…HRLRVRPREQ (73 aa)) folds into the RRM domain. The disordered stretch occupies residues 111–147 (QPQHTLGGHRLRVRPREQKEFQSPASKSPKGAAPDSH). Residue S205 participates in ATP binding. Mg(2+)-binding residues include D216 and D218. UTP contacts are provided by D216 and D218. The disordered stretch occupies residues 252-315 (QALACTPASP…PASPLQEDRG (64 aa)). The span at 259–269 (ASPPDSQPPSP) shows a compositional bias: pro residues. Over residues 279-290 (TPSSSLAPQTPD) the composition is skewed to polar residues. N391 serves as a coordination point for ATP. UTP-binding residues include N391, R413, Y431, and H548. One can recognise a PAP-associated domain in the interval 490-548 (LSSLLAQFFSCVSCWDLRGSLLSLREGQALPVAGDLPSNRWEGLRLGPMNLQDPFDLSH). Residues 597 to 869 (SSPSSLLSAT…VFLPQALRNL (273 aa)) are KA1; binds the bulging loops of U6 snRNA but is dispensable for terminal uridylyltransferase activity. 2 stretches are compositionally biased toward basic and acidic residues: residues 637 to 648 (GTKRLRSDRGGP) and 660 to 686 (LKLD…HSED). Disordered stretches follow at residues 637 to 686 (GTKR…HSED) and 720 to 755 (LATG…TGRG). Phosphoserine is present on residues S684 and S748.

This sequence belongs to the DNA polymerase type-B-like family. In terms of assembly, associates with the cleavage and polyadenylation specificity factor (CPSF) complex. Interacts with CPSF1 and CPSF3; the interaction is direct. Interacts with PIP5K1A. Mg(2+) serves as cofactor. The cofactor is Mn(2+). In terms of processing, phosphorylated by CK1 in the proline-rich (Pro-rich) region.

It is found in the nucleus. The protein resides in the nucleolus. It localises to the nucleus speckle. It carries out the reaction RNA(n) + UTP = RNA(n)-3'-uridine ribonucleotide + diphosphate. It catalyses the reaction RNA(n) + ATP = RNA(n)-3'-adenine ribonucleotide + diphosphate. With respect to regulation, adenylyltransferase activity is specifically phosphatidylinositol 4,5-bisphosphate (PtdIns(4,5)P2). Poly(A) polymerase that creates the 3'-poly(A) tail of specific pre-mRNAs. Localizes to nuclear speckles together with PIP5K1A and mediates polyadenylation of a select set of mRNAs, such as HMOX1. In addition to polyadenylation, it is also required for the 3'-end cleavage of pre-mRNAs: binds to the 3'UTR of targeted pre-mRNAs and promotes the recruitment and assembly of the CPSF complex on the 3'UTR of pre-mRNAs. In addition to adenylyltransferase activity, also has uridylyltransferase activity. However, the ATP ratio is higher than UTP in cells, suggesting that it functions primarily as a poly(A) polymerase. Acts as a specific terminal uridylyltransferase for U6 snRNA in vitro: responsible for a controlled elongation reaction that results in the restoration of the four 3'-terminal UMP-residues found in newly transcribed U6 snRNA. Not involved in replication-dependent histone mRNA degradation. In Ailuropoda melanoleuca (Giant panda), this protein is Speckle targeted PIP5K1A-regulated poly(A) polymerase (TUT1).